Consider the following 478-residue polypeptide: Zinc finger protein 410 (478 aa).

2 disordered regions span residues 84–113 (PDGE…LQDL) and 187–214 (NAKT…PLPQ). Positions 103–113 (TPESPSLLQDL) are enriched in polar residues. 5 C2H2-type zinc fingers span residues 219 to 243 (LKCT…LKTH), 249 to 273 (FICP…MRTH), 279 to 303 (FMCH…RRIH), 309 to 333 (FLCE…LVVH), and 339 to 362 (HQCQ…RKHH). The Zn(2+) site is built by Cys221, Cys226, His239, His243, Cys251, Cys256, His269, His273, Cys281, Cys286, His299, His303, Cys311, Cys316, His329, His333, Cys341, Cys344, His357, and His361.

Interacts with CDKN2A/p14ARF. Post-translationally, O-glycosylated. O-GlcNAcylation may occur in response to increasing glucose levels and affect transcription factor activity. In terms of processing, sumoylated. Sumoylation increases its half-life, possibly by blocking ubiquitin-mediated degradation.

It localises to the nucleus. The protein resides in the chromosome. Its function is as follows. Transcription factor that binds to the sequence motif 5'-CATCCCATAATA-3', and is specifically required to silence expression of fetal hemoglobin in adult erythroid cells. Prevents expression of fetal hemoglobin genes HBG1 and HBG2 through CHD4: acts as a direct transcriptional activator of CHD4, a central component of the NuRD complex that represses transcription of fetal hemoglobin genes HBG1 and HBG2 in erythroid cells. May also activate transcription of matrix-remodeling genes such as MMP1 during fibroblast senescence. May activate transcription of the gap junction gene GJC1, perhaps in response to increasing glucose. However, recent studies suggest that ZNF410 is dedicated to regulate expression of a single gene: CHD4. This Mus musculus (Mouse) protein is Zinc finger protein 410.